The following is a 503-amino-acid chain: ATP synthase subunit alpha (503 aa).

ATP is bound at residue 170-177; that stretch reads GDRKTGKT.

The protein belongs to the ATPase alpha/beta chains family. In terms of assembly, F-type ATPases have 2 components, CF(1) - the catalytic core - and CF(0) - the membrane proton channel. CF(1) has five subunits: alpha(3), beta(3), gamma(1), delta(1), epsilon(1). CF(0) has four main subunits: a(1), b(1), b'(1) and c(9-12).

It is found in the cellular thylakoid membrane. The catalysed reaction is ATP + H2O + 4 H(+)(in) = ADP + phosphate + 5 H(+)(out). Functionally, produces ATP from ADP in the presence of a proton gradient across the membrane. The alpha chain is a regulatory subunit. This Synechocystis sp. (strain ATCC 27184 / PCC 6803 / Kazusa) protein is ATP synthase subunit alpha.